Reading from the N-terminus, the 648-residue chain is Glutenin, high molecular weight subunit DY10 (648 aa).

Positions 1–21 are cleaved as a signal peptide; the sequence is MAKRLVLFAAVVIALVALTTA. The interval 127–648 is disordered; it reads YYPGVTSPRQ…EGGDALSASQ (522 aa). 3 stretches are compositionally biased toward low complexity: residues 141-166, 195-236, and 243-263; these read PGQA…QGQQ, QQPG…WQQG, and QQLG…GQQG. A compositionally biased stretch (polar residues) spans 264–274; that stretch reads HYPTSLQQPGQ. Composition is skewed to low complexity over residues 284-353, 360-416, 459-502, 510-523, and 531-565; these read QQQP…GQQG, QQPG…GQQG, QQPG…PGQG, QGYY…PGQG, and QGHC…GQQG. Over residues 578-592 the composition is skewed to gly residues; sequence QQSGQGQQSGQGHQP. The span at 593 to 604 shows a compositional bias: low complexity; that stretch reads GQGQQSGQEQQG.

This sequence belongs to the gliadin/glutenin family. As to quaternary structure, disulfide-bridge linked aggregates.

In terms of biological role, glutenins are high-molecular weight seed storage proteins of wheat endosperm. Thought to be responsible for the visco-elastic property of wheat dough. This chain is Glutenin, high molecular weight subunit DY10 (GLU-D1-2B), found in Triticum aestivum (Wheat).